The following is a 400-amino-acid chain: Diphosphomevalonate decarboxylase (400 aa).

Ala-2 is modified (N-acetylalanine). Residues 23–26 and Arg-78 contribute to the (R)-5-diphosphomevalonate site; that span reads YWGK. At Ser-96 the chain carries Phosphoserine. (R)-5-diphosphomevalonate-binding positions include 156 to 161 and Thr-212; that span reads SGSACR.

Belongs to the diphosphomevalonate decarboxylase family. In terms of assembly, homodimer. In terms of tissue distribution, expressed in heart, skeletal muscle, lung, liver, brain, pancreas, kidney and placenta.

It localises to the cytoplasm. It catalyses the reaction (R)-5-diphosphomevalonate + ATP = isopentenyl diphosphate + ADP + phosphate + CO2. Its pathway is steroid biosynthesis; cholesterol biosynthesis. Functionally, catalyzes the ATP dependent decarboxylation of (R)-5-diphosphomevalonate to form isopentenyl diphosphate (IPP). Functions in the mevalonate (MVA) pathway leading to isopentenyl diphosphate (IPP), a key precursor for the biosynthesis of isoprenoids and sterol synthesis. In Homo sapiens (Human), this protein is Diphosphomevalonate decarboxylase (MVD).